The chain runs to 235 residues: Proteasome subunit alpha type-2 (235 aa).

This sequence belongs to the peptidase T1A family. As to quaternary structure, the 26S proteasome consists of a 20S proteasome core and two 19S regulatory subunits. The 20S proteasome core is composed of 28 subunits that are arranged in four stacked rings, resulting in a barrel-shaped structure. The two end rings are each formed by seven alpha subunits, and the two central rings are each formed by seven beta subunits. The catalytic chamber with the active sites is on the inside of the barrel.

It is found in the cytoplasm. The protein resides in the nucleus. Its function is as follows. The proteasome is a multicatalytic proteinase complex which is characterized by its ability to cleave peptides with Arg, Phe, Tyr, Leu, and Glu adjacent to the leaving group at neutral or slightly basic pH. The proteasome has an ATP-dependent proteolytic activity. The sequence is that of Proteasome subunit alpha type-2 (PAB1) from Oryza sativa subsp. indica (Rice).